The primary structure comprises 359 residues: Methylthioribose-1-phosphate isomerase (359 aa).

Residues 50-52, R93, and Q200 contribute to the substrate site; that span reads RGA. The active-site Proton donor is D241. Residue 251 to 252 participates in substrate binding; that stretch reads NK.

This sequence belongs to the eIF-2B alpha/beta/delta subunits family. MtnA subfamily.

It carries out the reaction 5-(methylsulfanyl)-alpha-D-ribose 1-phosphate = 5-(methylsulfanyl)-D-ribulose 1-phosphate. The protein operates within amino-acid biosynthesis; L-methionine biosynthesis via salvage pathway; L-methionine from S-methyl-5-thio-alpha-D-ribose 1-phosphate: step 1/6. Functionally, catalyzes the interconversion of methylthioribose-1-phosphate (MTR-1-P) into methylthioribulose-1-phosphate (MTRu-1-P). This is Methylthioribose-1-phosphate isomerase from Symbiobacterium thermophilum (strain DSM 24528 / JCM 14929 / IAM 14863 / T).